A 303-amino-acid chain; its full sequence is Protoheme IX farnesyltransferase (303 aa).

A run of 8 helical transmembrane segments spans residues 25–45 (MGLV…AIVL), 54–74 (IPQI…ACAL), 104–124 (LLIL…ILNI), 125–145 (PSGV…SIWS), 151–171 (WNTV…WTAI), 179–199 (AIAL…ALAI), 228–248 (VWLI…PVFI), and 280–300 (FVYS…ISLI).

This sequence belongs to the UbiA prenyltransferase family. Protoheme IX farnesyltransferase subfamily. As to quaternary structure, interacts with CtaA.

It is found in the cell membrane. The enzyme catalyses heme b + (2E,6E)-farnesyl diphosphate + H2O = Fe(II)-heme o + diphosphate. The protein operates within porphyrin-containing compound metabolism; heme O biosynthesis; heme O from protoheme: step 1/1. Its function is as follows. Converts heme B (protoheme IX) to heme O by substitution of the vinyl group on carbon 2 of heme B porphyrin ring with a hydroxyethyl farnesyl side group. This is Protoheme IX farnesyltransferase from Staphylococcus carnosus (strain TM300).